A 308-amino-acid polypeptide reads, in one-letter code: Glutaminase (308 aa).

Substrate is bound by residues Ser-66, Asn-117, Glu-162, Asn-169, Tyr-193, Tyr-244, and Val-262.

The protein belongs to the glutaminase family. In terms of assembly, homotetramer.

It carries out the reaction L-glutamine + H2O = L-glutamate + NH4(+). The polypeptide is Glutaminase (Natranaerobius thermophilus (strain ATCC BAA-1301 / DSM 18059 / JW/NM-WN-LF)).